A 399-amino-acid chain; its full sequence is CCA-adding enzyme (399 aa).

Positions 32 and 35 each coordinate ATP. Glycine 32 and arginine 35 together coordinate CTP. Aspartate 45 and aspartate 47 together coordinate Mg(2+). ATP-binding residues include arginine 116, aspartate 159, arginine 162, arginine 165, and arginine 168. CTP is bound by residues arginine 116, aspartate 159, arginine 162, arginine 165, and arginine 168.

This sequence belongs to the tRNA nucleotidyltransferase/poly(A) polymerase family. Bacterial CCA-adding enzyme type 3 subfamily. Homodimer. The cofactor is Mg(2+).

The enzyme catalyses a tRNA precursor + 2 CTP + ATP = a tRNA with a 3' CCA end + 3 diphosphate. The catalysed reaction is a tRNA with a 3' CCA end + 2 CTP + ATP = a tRNA with a 3' CCACCA end + 3 diphosphate. Its function is as follows. Catalyzes the addition and repair of the essential 3'-terminal CCA sequence in tRNAs without using a nucleic acid template. Adds these three nucleotides in the order of C, C, and A to the tRNA nucleotide-73, using CTP and ATP as substrates and producing inorganic pyrophosphate. tRNA 3'-terminal CCA addition is required both for tRNA processing and repair. Also involved in tRNA surveillance by mediating tandem CCA addition to generate a CCACCA at the 3' terminus of unstable tRNAs. While stable tRNAs receive only 3'-terminal CCA, unstable tRNAs are marked with CCACCA and rapidly degraded. This Streptococcus pneumoniae serotype 4 (strain ATCC BAA-334 / TIGR4) protein is CCA-adding enzyme.